The sequence spans 102 residues: Small ribosomal subunit protein uS14 (102 aa).

This sequence belongs to the universal ribosomal protein uS14 family. Part of the 30S ribosomal subunit. Contacts proteins S3 and S10.

In terms of biological role, binds 16S rRNA, required for the assembly of 30S particles and may also be responsible for determining the conformation of the 16S rRNA at the A site. The chain is Small ribosomal subunit protein uS14 from Ehrlichia ruminantium (strain Gardel).